Reading from the N-terminus, the 750-residue chain is Phosphate transporter PHO1 homolog 7 (750 aa).

An SPX domain is found at 1-298; the sequence is MKFGKDFVRQ…SRSAAKPYME (298 aa). At 1–350 the chain is on the cytoplasmic side; that stretch reads MKFGKDFVRQ…KVKKEKHRIT (350 aa). The helical transmembrane segment at 351 to 371 threads the bilayer; sequence FSTGFFVGCTVSLVVALVMFI. Over 372 to 391 the chain is Extracellular; sequence HARNIMGAVGHKVYMETMFP. The chain crosses the membrane as a helical span at residues 392-412; it reads LYSLFAFVVLHMIMYASNIYF. Topologically, residues 413–435 are cytoplasmic; sequence WKRYRVNYPFIFGFKEGTELGYR. Residues 436–456 traverse the membrane as a helical segment; the sequence is HVLLLSFGLGTLALCAVLINL. At 457–472 the chain is on the extracellular side; that stretch reads DMEMDPNTNDYKTMTE. The helical transmembrane segment at 473–493 threads the bilayer; that stretch reads LLPMFILALVVAILFCPFNIF. Residues 494 to 622 are Cytoplasmic-facing; the sequence is YRSSRVFFLM…YSFNRGNIWK (129 aa). The EXS domain maps to 557–750; sequence RSSDVYSTFY…NYNEEEDRDS (194 aa). A helical membrane pass occupies residues 623-643; sequence ISAWVFSALATFYGTYWDIVF. At 644–666 the chain is on the extracellular side; it reads DWGLLHRPSKHLLREKLLVPHKA. Residues 667-687 form a helical membrane-spanning segment; that stretch reads VYYVAIVLNIVLRMAWLQTVL. The Cytoplasmic portion of the chain corresponds to 688 to 750; the sequence is DFNLSFLHRE…NYNEEEDRDS (63 aa).

The protein belongs to the SYG1 (TC 2.A.94) family. In terms of tissue distribution, expressed in root tips, vascular cylinders of roots and filaments, leaf hydathodes, stem, receptacle and stigma apex.

It localises to the cell membrane. May transport inorganic phosphate (Pi). The protein is Phosphate transporter PHO1 homolog 7 (PHO1-H7) of Arabidopsis thaliana (Mouse-ear cress).